The chain runs to 732 residues: Elongation factor 2 (732 aa).

Residues 19-228 form the tr-type G domain; that stretch reads ELIRNIGIVA…TKITFKDIVE (210 aa). Residues 28–35, 94–98, and 148–151 contribute to the GTP site; these read AHIDHGKT, DTPGH, and NKID. At histidine 598 the chain carries Diphthamide.

It belongs to the TRAFAC class translation factor GTPase superfamily. Classic translation factor GTPase family. EF-G/EF-2 subfamily.

The protein resides in the cytoplasm. Its function is as follows. Catalyzes the GTP-dependent ribosomal translocation step during translation elongation. During this step, the ribosome changes from the pre-translocational (PRE) to the post-translocational (POST) state as the newly formed A-site-bound peptidyl-tRNA and P-site-bound deacylated tRNA move to the P and E sites, respectively. Catalyzes the coordinated movement of the two tRNA molecules, the mRNA and conformational changes in the ribosome. In Thermoplasma acidophilum (strain ATCC 25905 / DSM 1728 / JCM 9062 / NBRC 15155 / AMRC-C165), this protein is Elongation factor 2 (fusA).